The chain runs to 304 residues: Voltage-dependent anion channel-forming protein YneE (304 aa).

4 consecutive transmembrane segments (helical) span residues 28-48 (LLLNFLLSIAVIIMLPWYTML), 50-70 (IKFTLAPFSILGVAIAIFLGF), 209-229 (AYTLILHRTVYLFCIMLPFAL), and 235-255 (YMTPFISVLISYTFIALDALA).

It belongs to the anion channel-forming bestrophin (TC 1.A.46) family.

Its subcellular location is the cell membrane. The chain is Voltage-dependent anion channel-forming protein YneE (yneE) from Salmonella typhi.